We begin with the raw amino-acid sequence, 188 residues long: Elongation factor P (188 aa).

Lys34 carries the post-translational modification N6-(3,6-diaminohexanoyl)-5-hydroxylysine.

The protein belongs to the elongation factor P family. May be beta-lysylated on the epsilon-amino group of Lys-34 by the combined action of EpmA and EpmB, and then hydroxylated on the C5 position of the same residue by EpmC (if this protein is present). Lysylation is critical for the stimulatory effect of EF-P on peptide-bond formation. The lysylation moiety may extend toward the peptidyltransferase center and stabilize the terminal 3-CCA end of the tRNA. Hydroxylation of the C5 position on Lys-34 may allow additional potential stabilizing hydrogen-bond interactions with the P-tRNA.

The protein resides in the cytoplasm. Its pathway is protein biosynthesis; polypeptide chain elongation. Functionally, involved in peptide bond synthesis. Alleviates ribosome stalling that occurs when 3 or more consecutive Pro residues or the sequence PPG is present in a protein, possibly by augmenting the peptidyl transferase activity of the ribosome. Modification of Lys-34 is required for alleviation. This Pectobacterium carotovorum subsp. carotovorum (strain PC1) protein is Elongation factor P.